Reading from the N-terminus, the 425-residue chain is Enolase (425 aa).

(2R)-2-phosphoglycerate is bound at residue Gln163. The active-site Proton donor is the Glu205. Residues Asp242, Glu285, and Asp312 each contribute to the Mg(2+) site. (2R)-2-phosphoglycerate is bound by residues Lys337, Arg366, Ser367, and Lys388. Residue Lys337 is the Proton acceptor of the active site.

This sequence belongs to the enolase family. It depends on Mg(2+) as a cofactor.

Its subcellular location is the cytoplasm. The protein resides in the secreted. The protein localises to the cell surface. It catalyses the reaction (2R)-2-phosphoglycerate = phosphoenolpyruvate + H2O. It functions in the pathway carbohydrate degradation; glycolysis; pyruvate from D-glyceraldehyde 3-phosphate: step 4/5. Functionally, catalyzes the reversible conversion of 2-phosphoglycerate (2-PG) into phosphoenolpyruvate (PEP). It is essential for the degradation of carbohydrates via glycolysis. The protein is Enolase of Acidiphilium cryptum (strain JF-5).